A 300-amino-acid polypeptide reads, in one-letter code: Estradiol 17-beta-dehydrogenase 11 (300 aa).

The first 19 residues, 1–19 (MKFLLDILLLLPLLIVCSL), serve as a signal peptide directing secretion. 40 to 64 (LITGAGHGIGRLTAYEFAKLKSKLV) is an NADP(+) binding site. Ser172 contacts substrate. Tyr185 acts as the Proton acceptor in catalysis.

This sequence belongs to the short-chain dehydrogenases/reductases (SDR) family. 17-beta-HSD 3 subfamily. In terms of tissue distribution, present at high level in steroidogenic cells such as syncytiotrophoblasts, sebaceous gland, Leydig cells, and granulosa cells of the dominant follicle and corpus luteum. In lung, it is detected in the ciliated epithelium and in acini of adult trachea, in bronchioles, but not in alveoli. In the eye, it is detected in the nonpigmented epithelium of the ciliary body and, at lower level, in the inner nuclear layer of the retina (at protein level). Widely expressed. Highly expressed in retina, pancreas, kidney, liver, lung, adrenal, small intestine, ovary and heart.

It localises to the endoplasmic reticulum. It is found in the lipid droplet. It catalyses the reaction 17beta-estradiol + NAD(+) = estrone + NADH + H(+). It carries out the reaction 17beta-estradiol + NADP(+) = estrone + NADPH + H(+). In terms of biological role, can convert androstan-3-alpha,17-beta-diol (3-alpha-diol) to androsterone in vitro, suggesting that it may participate in androgen metabolism during steroidogenesis. May act by metabolizing compounds that stimulate steroid synthesis and/or by generating metabolites that inhibit it. Has no activity toward DHEA (dehydroepiandrosterone), or A-dione (4-androste-3,17-dione), and only a slight activity toward testosterone to A-dione. Tumor-associated antigen in cutaneous T-cell lymphoma. The polypeptide is Estradiol 17-beta-dehydrogenase 11 (HSD17B11) (Homo sapiens (Human)).